Here is a 585-residue protein sequence, read N- to C-terminus: Amyloid protein-binding protein 2 (585 aa).

TPR repeat units lie at residues 50-83 (QGRLCQLGSEFCELEVFAKVLRALDKRHLLHHCF), 120-153 (IQVGFVLGGFLSDAGWYSDAEKVFLSCLQLCTLH), 206-239 (AALYGELCALLFAKSHYDEAYKWCIEAMKEITAG), 288-321 (SDTLLDYGFYLLNVDNICQSVAIYQAALDIRQSV), 333-367 (HEDLAYSSYVHQYSSGKFDNALFHAERAIGIITHI), 429-462 (AKHYGNLGRLYQSMRKFKEAEEMHIKAIQIKEQL), 471-505 (ALSVGHLASLYNYDMNQYENAEKLYLRSIAIGKKL), and 514-547 (EYDYRGLIKLYNSIGNYEKVFEYHNVLSNWNRLR).

As to quaternary structure, component of a CRL2 E3 ubiquitin-protein ligase complex, also named ECS (Elongin BC-CUL2/5-SOCS-box protein) complex, composed of CUL2, Elongin BC (ELOB and ELOC), RBX1 and substrate-specific adapter APPBP2. Interacts with APP; APP interaction inhibits the E3 ubiquitin-protein ligase activity of the CRL2(APPBP2) complex. Post-translationally, rapidly degraded by the proteasome upon overexpression of a C-terminal fragment of APP.

The protein localises to the nucleus. Its subcellular location is the cytoplasm. It is found in the cytoskeleton. It localises to the membrane. It participates in protein modification; protein ubiquitination. Its activity is regulated as follows. E3 ubiquitin-protein ligase activity of the CRL2(APPBP2) complex is inhibited by APP. In terms of biological role, substrate-recognition component of a Cul2-RING (CRL2) E3 ubiquitin-protein ligase complex of the DesCEND (destruction via C-end degrons) pathway, which recognizes a C-degron located at the extreme C terminus of target proteins, leading to their ubiquitination and degradation. The C-degron recognized by the DesCEND pathway is usually a motif of less than ten residues and can be present in full-length proteins, truncated proteins or proteolytically cleaved forms. The CRL2(APPBP2) complex specifically recognizes proteins with a -Arg-Xaa-Xaa-Gly degron at the C-terminus, leading to their ubiquitination and degradation. The CRL2(APPBP2) complex mediates ubiquitination and degradation of truncated SELENOV selenoproteins produced by failed UGA/Sec decoding, which end with a -Arg-Xaa-Xaa-Gly degron. May play a role in intracellular protein transport: may be involved in the translocation of APP along microtubules toward the cell surface. The sequence is that of Amyloid protein-binding protein 2 from Homo sapiens (Human).